A 483-amino-acid chain; its full sequence is Transmembrane protein 39B (483 aa).

An N-linked (GlcNAc...) asparagine glycan is attached at Asn-9. A run of 7 helical transmembrane segments spans residues 76–96 (HLLF…VHYI), 114–134 (TSLN…IVLA), 158–182 (LLVA…ILLF), 187–207 (FFNL…LQLG), 281–301 (EVLL…VWFV), 414–434 (VLNI…YSLL), and 440–460 (HHTI…FKLL).

The protein belongs to the TMEM39 family.

The protein resides in the endoplasmic reticulum membrane. Functionally, may protect the cells against DNA damage caused by exposure to the cold-warming stress and facilitates tissue damage repair during the recovery phase. This Xenopus tropicalis (Western clawed frog) protein is Transmembrane protein 39B.